The primary structure comprises 327 residues: ATP-dependent 6-phosphofructokinase (327 aa).

ATP is bound by residues Gly12, 73 to 74, and 103 to 106; these read RL and GDGS. Position 104 (Asp104) interacts with Mg(2+). Position 126–128 (126–128) interacts with substrate; the sequence is TID. The Proton acceptor role is filled by Asp128. Arg155 is an ADP binding site. Residues Arg163 and 170 to 172 contribute to the substrate site; that span reads MGH. ADP-binding positions include 186 to 188 and 214 to 216; these read GAD and KRS. Substrate-binding positions include Glu223, Arg245, and 251-254; that span reads HTQR.

The protein belongs to the phosphofructokinase type A (PFKA) family. ATP-dependent PFK group I subfamily. Prokaryotic clade 'B1' sub-subfamily. In terms of assembly, homotetramer. Requires Mg(2+) as cofactor.

It localises to the cytoplasm. It carries out the reaction beta-D-fructose 6-phosphate + ATP = beta-D-fructose 1,6-bisphosphate + ADP + H(+). The protein operates within carbohydrate degradation; glycolysis; D-glyceraldehyde 3-phosphate and glycerone phosphate from D-glucose: step 3/4. With respect to regulation, allosterically activated by ADP and other diphosphonucleosides, and allosterically inhibited by phosphoenolpyruvate. In terms of biological role, catalyzes the phosphorylation of D-fructose 6-phosphate to fructose 1,6-bisphosphate by ATP, the first committing step of glycolysis. This is ATP-dependent 6-phosphofructokinase from Spiroplasma citri.